We begin with the raw amino-acid sequence, 164 residues long: MKMFVPAVVFAALASASAWANNGDTAQPLEKIAPYPQAEKGMKRQVITLTPQQDESTLKVELLIGQTLNVDCNQHRLGGTLETKTLEGWGYDYYVFDNVTSPVSTMMACPEGKKEQKFVTAWLGEDGMLRYNSKLPIVVYTPANVDVKYRIWKADANVQNAVAR.

An N-terminal signal peptide occupies residues 1–20; the sequence is MKMFVPAVVFAALASASAWA. The cysteines at positions 72 and 109 are disulfide-linked.

It belongs to the protease inhibitor I11 (ecotin) family. Homodimer.

The protein localises to the periplasm. General inhibitor of pancreatic serine proteases: inhibits chymotrypsin, trypsin, elastases, factor X, kallikrein as well as a variety of other proteases. The protein is Ecotin of Salmonella enteritidis PT4 (strain P125109).